The sequence spans 188 residues: PRA1 family protein 3 (188 aa).

Methionine 1 carries the N-acetylmethionine modification. Residues 1-35 lie on the Cytoplasmic side of the membrane; that stretch reads MDVNIAPLRAWDDFFPGSDRFAQPDFRDISKWNNR. Transmembrane regions (helical) follow at residues 36 to 56 and 57 to 77; these read VVSN…MMIS and VVGF…VLVF. Topologically, residues 78-93 are cytoplasmic; that stretch reads TGFVWAAHNKDALRRL. A run of 2 helical transmembrane segments spans residues 94–114 and 115–135; these read KKRY…FLIS and MFGG…LMFI. A required for homodimer formation and heterodimer formation with ARL6IP1 region spans residues 103-117; the sequence is MVVMLASYFLISMFG. Over 136–188 the chain is Cytoplasmic; sequence HASLRLRNLKNKLENKMEGIGLKRTPMGIVLDALEQQEEGINRLTDYISKVKE. The interval 136–188 is targeting to endoplasmic reticulum membrane; the sequence is HASLRLRNLKNKLENKMEGIGLKRTPMGIVLDALEQQEEGINRLTDYISKVKE.

This sequence belongs to the PRA1 family. Homodimer. Heterodimer with ARL6IP1. Forms multimers. Interacts with ARL6. Interacts with prenylated RAB1A and RAB3A. Interacts with SLC1A1/EAAC1. Interacts with RTN2 (via first transmembrane domain). Does not interact with VAMP1, VAMP2 or VAMP3.

The protein localises to the endoplasmic reticulum membrane. Its subcellular location is the cell membrane. It localises to the cytoplasm. It is found in the cytoskeleton. Regulates intracellular concentrations of taurine and glutamate. Negatively modulates SLC1A1/EAAC1 glutamate transport activity by decreasing its affinity for glutamate in a PKC activity-dependent manner. Plays a role in the retention of SLC1A1/EAAC1 in the endoplasmic reticulum. The chain is PRA1 family protein 3 (ARL6IP5) from Macaca fascicularis (Crab-eating macaque).